Here is a 700-residue protein sequence, read N- to C-terminus: Pyrroloquinoline quinone transporter (700 aa).

The first 23 residues, 1–23 (MKIFSVRQTVLPALLVLSPVVFA), serve as a signal peptide directing secretion. The 119-residue stretch at 39–157 (SELDTPAAVS…SGGVMNVTTQ (119 aa)) folds into the TBDR plug domain. The next 24 membrane-spanning stretches (beta stranded) occupy residues 132-136 (NVEVL), 150-160 (GVMNVTTQTGQ), 162-171 (PPTIEASSYY), 177-186 (WRYGLKATGA), 195-204 (DVDYTVSTTR), 220-227 (LANAKLGV), 233-241 (SKLSLIFNS), 280-288 (QAGLRYERS), 295-301 (MSVMMYA), 335-344 (GIDSRWTHRG), 350-358 (VTFTTGLNY), 398-405 (DPYLQTQW), 411-419 (LSLDAGVRY), 447-456 (WLPAGSLKYA), 464-468 (YLAAG), 500-509 (TIEIGSKTRI), 511-520 (DGLLSLALFQ), 549-556 (GAELAWDQ), 563-570 (RVNASWTW), 597-604 (MGFASIGY), 611-617 (YAGTEAR), 637-647 (LVGLFTGYKYN), 651-659 (LTVDLFGRV), and 689-697 (YGVGMNIAW). Residues 162 to 697 (PPTIEASSYY…NYGVGMNIAW (536 aa)) enclose the TBDR beta-barrel domain. A TonB C-terminal box motif is present at residues 680 to 700 (YYEPSPGRNYGVGMNIAWRFE).

Belongs to the TonB-dependent receptor family.

It is found in the cell outer membrane. Functionally, mediates the TonB-dependent high affinity transport across the outer membrane of pyrroloquinoline quinone (PQQ), a redox cofactor required for the activity of Gcd and Asd dehydrogenases. The uptake process is energised via the TonB-ExbBD complex. Not involved in the transport of an iron-containing substrate under laboratory conditions. The protein is Pyrroloquinoline quinone transporter of Escherichia coli (strain K12).